Consider the following 224-residue polypeptide: ATP phosphoribosyltransferase (224 aa).

It belongs to the ATP phosphoribosyltransferase family. Short subfamily. Heteromultimer composed of HisG and HisZ subunits.

It is found in the cytoplasm. The catalysed reaction is 1-(5-phospho-beta-D-ribosyl)-ATP + diphosphate = 5-phospho-alpha-D-ribose 1-diphosphate + ATP. The protein operates within amino-acid biosynthesis; L-histidine biosynthesis; L-histidine from 5-phospho-alpha-D-ribose 1-diphosphate: step 1/9. Its function is as follows. Catalyzes the condensation of ATP and 5-phosphoribose 1-diphosphate to form N'-(5'-phosphoribosyl)-ATP (PR-ATP). Has a crucial role in the pathway because the rate of histidine biosynthesis seems to be controlled primarily by regulation of HisG enzymatic activity. The sequence is that of ATP phosphoribosyltransferase from Cupriavidus necator (strain ATCC 17699 / DSM 428 / KCTC 22496 / NCIMB 10442 / H16 / Stanier 337) (Ralstonia eutropha).